A 565-amino-acid polypeptide reads, in one-letter code: E3 ubiquitin-protein ligase RNF168 (565 aa).

Residues 16 to 55 (CGICMEILLEPVTLPCNHTLCNPCFQSTVEKANLCCPFCR) form an RING-type zinc finger. Serine 70 is subject to Phosphoserine. Residues 110 to 128 (LSEPGELRREYEEEISRVE) carry the LR motif 1 motif. Serine 134 is modified (phosphoserine). The UMI motif motif lies at 143–151 (EEYIQRLLA). Disordered regions lie at residues 150–223 (LAEE…KTFG) and 252–302 (SKET…PQLC). Over residues 157 to 179 (EKRQREKRRSEMEEQLRGDEELA) the composition is skewed to basic and acidic residues. Positions 168 to 191 (MEEQLRGDEELARSLSTSINSNYE) match the MIU motif 1 motif. Residues 181–201 (SLSTSINSNYERNTLASPLSS) show a composition bias toward polar residues. At serine 197 the chain carries Phosphoserine. Lysine 210 is covalently cross-linked (Glycyl lysine isopeptide (Lys-Gly) (interchain with G-Cter in SUMO2)). Polar residues predominate over residues 275–293 (PTLSPQTCLETQEQGSESS). Phosphoserine is present on residues serine 413 and serine 414. The short motif at 438 to 461 (RHKQEEQDRLLALQLQKEVDKEQM) is the MIU motif 2 element. The interval 458-521 (KEQMVPNRQK…TKGDYWEPFK (64 aa)) is disordered. Residues 465 to 476 (RQKGSPDQYQLR) carry the LR motif 2 motif. Residues 466–477 (QKGSPDQYQLRT) show a composition bias toward polar residues. Serine 469 carries the post-translational modification Phosphoserine. Positions 504-518 (DHSKSPRNTKGDYWE) are enriched in basic and acidic residues. Lysine 525 participates in a covalent cross-link: Glycyl lysine isopeptide (Lys-Gly) (interchain with G-Cter in SUMO2).

It belongs to the RNF168 family. Monomer. Interacts with UBE2N/UBC13. Sumoylated with SUMO1 by PIAS4 in response to double-strand breaks (DSBs). In terms of processing, ubiquitinated.

The protein resides in the nucleus. The enzyme catalyses S-ubiquitinyl-[E2 ubiquitin-conjugating enzyme]-L-cysteine + [acceptor protein]-L-lysine = [E2 ubiquitin-conjugating enzyme]-L-cysteine + N(6)-ubiquitinyl-[acceptor protein]-L-lysine.. It functions in the pathway protein modification; protein ubiquitination. In terms of biological role, E3 ubiquitin-protein ligase required for accumulation of repair proteins to sites of DNA damage. Acts with UBE2N/UBC13 to amplify the RNF8-dependent histone ubiquitination. Recruited to sites of DNA damage at double-strand breaks (DSBs) by binding to ubiquitinated histone H2A and H2AX and amplifies the RNF8-dependent H2A ubiquitination, promoting the formation of 'Lys-63'-linked ubiquitin conjugates. This leads to concentrate ubiquitinated histones H2A and H2AX at DNA lesions to the threshold required for recruitment of TP53BP1 and BRCA1. Also recruited at DNA interstrand cross-links (ICLs) sites and promotes accumulation of 'Lys-63'-linked ubiquitination of histones H2A and H2AX, leading to recruitment of FAAP20 and Fanconi anemia (FA) complex, followed by interstrand cross-link repair. H2A ubiquitination also mediates the ATM-dependent transcriptional silencing at regions flanking DSBs in cis, a mechanism to avoid collision between transcription and repair intermediates. Also involved in class switch recombination in immune system, via its role in regulation of DSBs repair. Following DNA damage, promotes the ubiquitination and degradation of JMJD2A/KDM4A in collaboration with RNF8, leading to unmask H4K20me2 mark and promote the recruitment of TP53BP1 at DNA damage sites. Not able to initiate 'Lys-63'-linked ubiquitination in vitro; possibly due to partial occlusion of the UBE2N/UBC13-binding region. Catalyzes monoubiquitination of 'Lys-13' and 'Lys-15' of nucleosomal histone H2A (H2AK13Ub and H2AK15Ub, respectively). The polypeptide is E3 ubiquitin-protein ligase RNF168 (Mus musculus (Mouse)).